The primary structure comprises 375 residues: Biotin synthase, mitochondrial (375 aa).

The N-terminal 16 residues, 1 to 16 (MMSTIYRHLSTARPAL), are a transit peptide targeting the mitochondrion. The Radical SAM core domain maps to 81 to 310 (HDPTKVQLCT…IATARIVMPK (230 aa)). [4Fe-4S] cluster-binding residues include cysteine 99, cysteine 103, and cysteine 106. [2Fe-2S] cluster-binding residues include cysteine 143, cysteine 176, cysteine 236, and arginine 314.

Belongs to the radical SAM superfamily. Biotin synthase family. [4Fe-4S] cluster is required as a cofactor. It depends on [2Fe-2S] cluster as a cofactor.

The protein resides in the mitochondrion. It catalyses the reaction (4R,5S)-dethiobiotin + (sulfur carrier)-SH + 2 reduced [2Fe-2S]-[ferredoxin] + 2 S-adenosyl-L-methionine = (sulfur carrier)-H + biotin + 2 5'-deoxyadenosine + 2 L-methionine + 2 oxidized [2Fe-2S]-[ferredoxin]. Its pathway is cofactor biosynthesis; biotin biosynthesis; biotin from 7,8-diaminononanoate: step 2/2. This Saccharomyces cerevisiae (strain ATCC 204508 / S288c) (Baker's yeast) protein is Biotin synthase, mitochondrial (BIO2).